The primary structure comprises 492 residues: Ketol-acid reductoisomerase (NADP(+)) (492 aa).

The region spanning 14-208 (LDQLGKCRFM…GGHRAGVLQS (195 aa)) is the KARI N-terminal Rossmann domain. Residues 45–48 (CGAQ), Arg68, Arg76, Ser78, and 108–110 (DKQ) contribute to the NADP(+) site. The active site involves His132. Residue Gly158 coordinates NADP(+). KARI C-terminal knotted domains follow at residues 209–344 (SFVA…NAPQ) and 345–485 (FDGK…MKDM). Asp217, Glu221, Glu389, and Glu393 together coordinate Mg(2+). Ser414 contacts substrate.

Belongs to the ketol-acid reductoisomerase family. The cofactor is Mg(2+).

The catalysed reaction is (2R)-2,3-dihydroxy-3-methylbutanoate + NADP(+) = (2S)-2-acetolactate + NADPH + H(+). The enzyme catalyses (2R,3R)-2,3-dihydroxy-3-methylpentanoate + NADP(+) = (S)-2-ethyl-2-hydroxy-3-oxobutanoate + NADPH + H(+). It functions in the pathway amino-acid biosynthesis; L-isoleucine biosynthesis; L-isoleucine from 2-oxobutanoate: step 2/4. The protein operates within amino-acid biosynthesis; L-valine biosynthesis; L-valine from pyruvate: step 2/4. Functionally, involved in the biosynthesis of branched-chain amino acids (BCAA). Catalyzes an alkyl-migration followed by a ketol-acid reduction of (S)-2-acetolactate (S2AL) to yield (R)-2,3-dihydroxy-isovalerate. In the isomerase reaction, S2AL is rearranged via a Mg-dependent methyl migration to produce 3-hydroxy-3-methyl-2-ketobutyrate (HMKB). In the reductase reaction, this 2-ketoacid undergoes a metal-dependent reduction by NADPH to yield (R)-2,3-dihydroxy-isovalerate. This Pectobacterium atrosepticum (strain SCRI 1043 / ATCC BAA-672) (Erwinia carotovora subsp. atroseptica) protein is Ketol-acid reductoisomerase (NADP(+)).